Consider the following 189-residue polypeptide: Photosystem I assembly protein Ycf4 (189 aa).

2 helical membrane-spanning segments follow: residues Trp-29–Leu-49 and Leu-69–Ile-89.

This sequence belongs to the Ycf4 family.

The protein resides in the cellular thylakoid membrane. Functionally, seems to be required for the assembly of the photosystem I complex. The polypeptide is Photosystem I assembly protein Ycf4 (Nostoc punctiforme (strain ATCC 29133 / PCC 73102)).